We begin with the raw amino-acid sequence, 247 residues long: VQ motif-containing protein 4 (247 aa).

Positions 1 to 128 (MENSPRYREA…SSSSASGFRL (128 aa)) are disordered. Residue serine 16 is modified to Phosphoserine. The span at 21–37 (NSNNSCGMSSSSESNKP) shows a compositional bias: low complexity. 2 stretches are compositionally biased toward polar residues: residues 48 to 75 (RSES…QMLT) and 87 to 106 (LKPN…SSFS). A VQ motif is present at residues 67–76 (FKQVVQMLTG). Phosphoserine is present on residues serine 106, serine 155, serine 163, serine 165, and serine 175. Residue threonine 178 is modified to Phosphothreonine. The interval 184-247 (PFDRSGSSNQ…VSGSSSASTS (64 aa)) is disordered. A Phosphoserine modification is found at serine 194. A compositionally biased stretch (basic and acidic residues) spans 200-210 (AEEKAMKERGF). A Phosphoserine modification is found at serine 215. A phosphothreonine mark is found at threonine 219 and threonine 234. A phosphoserine mark is found at serine 235, serine 239, and serine 243. Positions 236 to 247 (PRVSGSSSASTS) are enriched in polar residues.

Interacts with MPK3 and MPK6. Phosphorylated on serine and threonine residues by MPK6 following treatment with the pathogen-associated molecular pattern (PAMP) flg22. MAP kinase-mediated phosphorylation after PAMP elicitation causes degradation of VQ4, allowing WRKY33 to promote transcription from defense genes.

It is found in the nucleus. Its function is as follows. Acts as a negative regulator of WRKY33 transcription factor activity in the promotion of defense gene expression. Acts as a negative regulator of pathogen-associated molecular pattern (PAMP)-induced responses to modulate resistance to pathogens. This is VQ motif-containing protein 4 from Arabidopsis thaliana (Mouse-ear cress).